A 94-amino-acid chain; its full sequence is CRISPR-associated endoribonuclease Cas2 1 (94 aa).

D8 serves as a coordination point for Mg(2+).

It belongs to the CRISPR-associated endoribonuclease Cas2 protein family. As to quaternary structure, homodimer, forms a heterotetramer with a Cas1 homodimer. The cofactor is Mg(2+).

In terms of biological role, CRISPR (clustered regularly interspaced short palindromic repeat), is an adaptive immune system that provides protection against mobile genetic elements (viruses, transposable elements and conjugative plasmids). CRISPR clusters contain sequences complementary to antecedent mobile elements and target invading nucleic acids. CRISPR clusters are transcribed and processed into CRISPR RNA (crRNA). Functions as a ssRNA-specific endoribonuclease. Involved in the integration of spacer DNA into the CRISPR cassette. This chain is CRISPR-associated endoribonuclease Cas2 1, found in Synechocystis sp. (strain ATCC 27184 / PCC 6803 / Kazusa).